A 165-amino-acid chain; its full sequence is Pro-MCH (165 aa).

A signal peptide spans 1 to 21 (MAKMSLSSYMLMLAFSLFSHG). Residues 69–82 (DESGFMKDDDDKTT) are compositionally biased toward basic and acidic residues. The segment at 69–89 (DESGFMKDDDDKTTKNTGSKQ) is disordered. Ile143 bears the Isoleucine amide mark. Cys153 and Cys162 are oxidised to a cystine.

Belongs to the melanin-concentrating hormone family. Post-translationally, pro-MCH is processed differentially in the brain and in peripheral organs producing two neuropeptides; NEI and MCH. A third peptide, NGE, may also be produced. Preferential processing in neurons by prohormone convertase 2 (PC2) generates NEI. MCH is generated in neurons of the lateral hypothalmic area by several prohormone convertases including PC1/3, PC2 and PC5/6. MCH is present in all regions of the brain and in neurointermediate lobe of the pituarity gland, with highest concentrations in the hypothalamus. Also expressed to a much lesser extent in stomach, lamina propria of both duodenum and colon, ovary, thymus, pancreas, adrenal gland and testis (spermatogonia, early spermatocytes and Sertoli cells). Weak expression in heart and lung. The other peptides are expressed at least in Sertoli cells, nei being also expressed in brain, stomach and proximal duodenum. In brain exclusively mature mch and nei peptides are present. In peripheral tissues a large product, encompassing the NEI and MCH domains of the precursor, is found predominantly. At low levels fully processed MCH and NEI peptides are present in gut. No expression in peripheral blood.

The protein localises to the secreted. Functionally, MCH inhibits ACTH secretion at the end of the light on period which corresponds to the peak of the circadian rhythm in ACTH. Inhibits also stress induced ACTH release during the light off period of the cycle. Involved as a neurotransmitter or neuromodulator in a broad array of neuronal functions. Stimulates sexual behavior when injected into the ventromedial nucleus, this effect is antagonized by NEI. In the medial preoptic area, stimulates anxiety and sexual behavior. Antagonizes inhibitory effect of melanotropin alpha on exploration behavior. In terms of biological role, NEI can influence differentiation of neuronal processes in brain neurons. Affects the content of neurofilament protein in neuritogenesis (in vitro). May also be a neuromodulatory factor. In behavioral tests, it stimulates exploration and anxiety when injected into the ventromedial nucleus. Also stimulates grooming, locomotion and rearing. May antagonize the inhibitory effect of mch on ACTH release. Reduces dopamine and dopac release in the ventromedial nucleus. In Rattus norvegicus (Rat), this protein is Pro-MCH (Pmch).